Consider the following 711-residue polypeptide: Ribosomal RNA large subunit methyltransferase K/L (711 aa).

The region spanning D42–L153 is the THUMP domain.

Belongs to the methyltransferase superfamily. RlmKL family.

Its subcellular location is the cytoplasm. It carries out the reaction guanosine(2445) in 23S rRNA + S-adenosyl-L-methionine = N(2)-methylguanosine(2445) in 23S rRNA + S-adenosyl-L-homocysteine + H(+). The catalysed reaction is guanosine(2069) in 23S rRNA + S-adenosyl-L-methionine = N(2)-methylguanosine(2069) in 23S rRNA + S-adenosyl-L-homocysteine + H(+). In terms of biological role, specifically methylates the guanine in position 2445 (m2G2445) and the guanine in position 2069 (m7G2069) of 23S rRNA. In Xanthomonas campestris pv. campestris (strain B100), this protein is Ribosomal RNA large subunit methyltransferase K/L.